The following is a 252-amino-acid chain: Chitooligosaccharide deacetylase (252 aa).

Residues His61 and His125 each contribute to the Mg(2+) site.

Belongs to the YdjC deacetylase family. ChbG subfamily. Homodimer. Requires Mg(2+) as cofactor.

The protein localises to the cytoplasm. It catalyses the reaction N,N'-diacetylchitobiose + H2O = N-acetyl-beta-D-glucosaminyl-(1-&gt;4)-D-glucosamine + acetate. The catalysed reaction is diacetylchitobiose-6'-phosphate + H2O = N'-monoacetylchitobiose-6'-phosphate + acetate. Its pathway is glycan degradation; chitin degradation. In terms of biological role, involved in the degradation of chitin. ChbG is essential for growth on the acetylated chitooligosaccharides chitobiose and chitotriose but is dispensable for growth on cellobiose and chitosan dimer, the deacetylated form of chitobiose. Deacetylation of chitobiose-6-P and chitotriose-6-P is necessary for both the activation of the chb promoter by the regulatory protein ChbR and the hydrolysis of phosphorylated beta-glucosides by the phospho-beta-glucosidase ChbF. Catalyzes the removal of only one acetyl group from chitobiose-6-P to yield monoacetylchitobiose-6-P, the inducer of ChbR and the substrate of ChbF. In Escherichia coli O8 (strain IAI1), this protein is Chitooligosaccharide deacetylase.